The primary structure comprises 553 residues: Putative transport protein ASA_0825 (553 aa).

Helical transmembrane passes span 4-24 (IALSISMLSLVAVLGLWLGNW), 29-49 (VGLGIGGVLFGGIIVGHFAGV), 65-85 (FGLILFVYTIGIQVGPGFFSS), 95-115 (GFAALLVILGCVVAAGLHQLF), and 158-178 (MGYAVAYPFGICGILLTMWLV). 2 consecutive RCK C-terminal domains span residues 191–276 (DLFE…VLGE) and 279–361 (ETSL…VVGN). 6 helical membrane-spanning segments follow: residues 371 to 391 (MLPVFIGIGLGVLLGSIPFYL), 403 to 425 (AGGPLVVALILSRIGSIGKLYWF), 439 to 459 (IVLFLAVVGFKSGAGFVDTLI), 465 to 485 (AWMMYGMAITLIPLLVVGVLA), 493 to 513 (YLTLCGLLAGSMTDPPALAFA), and 533 to 553 (LVMFLRIISPQLLAILLWAGV).

This sequence belongs to the AAE transporter (TC 2.A.81) family. YidE subfamily.

The protein resides in the cell membrane. The protein is Putative transport protein ASA_0825 of Aeromonas salmonicida (strain A449).